A 941-amino-acid polypeptide reads, in one-letter code: Bifunctional glutamine synthetase adenylyltransferase/adenylyl-removing enzyme (941 aa).

The interval 1–437 (MSIPTASLSP…TAEFAELLAP (437 aa)) is adenylyl removase. The tract at residues 444 to 941 (PDTLADYWRA…FPLGKDEAAL (498 aa)) is adenylyl transferase.

The protein belongs to the GlnE family. Mg(2+) is required as a cofactor.

It catalyses the reaction [glutamine synthetase]-O(4)-(5'-adenylyl)-L-tyrosine + phosphate = [glutamine synthetase]-L-tyrosine + ADP. The enzyme catalyses [glutamine synthetase]-L-tyrosine + ATP = [glutamine synthetase]-O(4)-(5'-adenylyl)-L-tyrosine + diphosphate. Functionally, involved in the regulation of glutamine synthetase GlnA, a key enzyme in the process to assimilate ammonia. When cellular nitrogen levels are high, the C-terminal adenylyl transferase (AT) inactivates GlnA by covalent transfer of an adenylyl group from ATP to specific tyrosine residue of GlnA, thus reducing its activity. Conversely, when nitrogen levels are low, the N-terminal adenylyl removase (AR) activates GlnA by removing the adenylyl group by phosphorolysis, increasing its activity. The regulatory region of GlnE binds the signal transduction protein PII (GlnB) which indicates the nitrogen status of the cell. The protein is Bifunctional glutamine synthetase adenylyltransferase/adenylyl-removing enzyme of Xanthomonas oryzae pv. oryzae (strain MAFF 311018).